The primary structure comprises 1572 residues: Multiple epidermal growth factor-like domains protein 6 (1572 aa).

Positions 1 to 26 (MPVGVEARASWRVVALTLLLLPAVPA) are cleaved as a signal peptide. The EMI domain maps to 40 to 121 (MPHVCAEQKL…QKPGQEGCLS (82 aa)). 36 disulfide bridges follow: C44-C107, C73-C79, C106-C119, C126-C137, C133-C146, C148-C161, C167-C178, C174-C187, C189-C202, C291-C302, C298-C311, C313-C326, C418-C429, C425-C438, C440-C453, C522-C535, C529-C542, C544-C553, C566-C578, C572-C585, C587-C596, C609-C621, C615-C628, C630-C639, C788-C797, C791-C804, C806-C815, C832-C840, C834-C847, C849-C858, C871-C884, C875-C891, C893-C902, C915-C927, C921-C934, and C936-C945. The region spanning 122-162 (DVDECANANGGCEGPCCNTVGGFYCRCPPGYQLQGDGKTCQ) is the EGF-like 1; calcium-binding domain. The EGF-like 2; calcium-binding domain maps to 163-203 (DVDECRSHNGGCQHRCVNTPGSYLCECKPGFRLHTDGRTCL). The 41-residue stretch at 287-327 (DVDECALGLAQCAHGCLNTQGSFKCVCHAGYELGADGRQCY) folds into the EGF-like 3; calcium-binding domain. Residues 414–454 (DVDECASGHSGCEHHCSNLAGSFQCFCEAGYRLDEDRRGCT) form the EGF-like 4; calcium-binding domain. EGF-like domains are found at residues 518-554 (FGHD…IICN), 562-597 (FGKN…AHCE), 605-640 (YGKH…RFCH), 785-816 (QEIC…SRCQ), 829-859 (QMRC…LSCQ), 867-903 (WGPD…PQCE), 911-946 (FGPG…SFCE), 997-1032 (FGLN…PTCL), 1040-1075 (YGKN…LACE), 1083-1118 (HGAG…DKCQ), 1131-1161 (EEHC…SHCE), 1169-1204 (FGEA…PGCE), 1256-1291 (YGPG…ADCS), 1299-1334 (FGPS…GHCE), 1342-1377 (FGKG…PHCE), 1390-1420 (LLEC…QACE), and 1428-1463 (HGSG…QFCE). N-linked (GlcNAc...) asparagine glycosylation occurs at N1000. Intrachain disulfides connect C1001/C1013, C1007/C1020, C1022/C1031, C1044/C1056, C1050/C1063, C1065/C1074, C1087/C1099, C1093/C1106, C1108/C1117, C1134/C1142, C1136/C1149, C1151/C1160, C1173/C1185, C1177/C1192, C1194/C1203, C1260/C1272, C1266/C1279, C1281/C1290, C1303/C1315, C1309/C1322, C1324/C1333, C1346/C1358, C1352/C1365, C1367/C1376, C1393/C1401, C1395/C1408, C1410/C1419, C1432/C1444, C1438/C1451, and C1453/C1462.

It is found in the secreted. This is Multiple epidermal growth factor-like domains protein 6 (Megf6) from Mus musculus (Mouse).